Reading from the N-terminus, the 27-residue chain is Nemertide alpha-8 (27 aa).

Disulfide bonds link Cys2-Cys16, Cys9-Cys20, and Cys15-Cys26.

It belongs to the nemertide family. As to expression, confined to the epidermis and to the mucus layer.

Its subcellular location is the secreted. Its function is as follows. Highly potent toxin against both insect and some mammalian sodium channels (Nav). It potently inhibits inactivation of insect sodium channels of B.germanica (BgNav1) and also delays the inactivation of mammalian Nav with potent activity on Nav1.3/SCN3A and Nav1.4/SCN4A. 1 uM is enough to completely inhibits the inactivation, resulting in sustained non-inactivating currents. In addition, the toxin significantly enhances the recovery from inactivation, and the open state is not required for the toxin to interact with the channel. In vivo, injection into brine shrimp (Artemia salina) stops movement or causes death after 24 hours (EC(50)=0.4 uM). The polypeptide is Nemertide alpha-8 (Riseriellus occultus (Ribbon worm)).